The following is a 202-amino-acid chain: Outer-membrane lipoprotein LolB (202 aa).

Residues 1 to 18 form the signal peptide; the sequence is MFRRTYFWLMLLPLFMVG. Cys19 carries N-palmitoyl cysteine lipidation. Cys19 is lipidated: S-diacylglycerol cysteine.

Belongs to the LolB family. Monomer.

It localises to the cell outer membrane. Its function is as follows. Plays a critical role in the incorporation of lipoproteins in the outer membrane after they are released by the LolA protein. This chain is Outer-membrane lipoprotein LolB, found in Vibrio vulnificus (strain YJ016).